The chain runs to 172 residues: Phosphopantetheine adenylyltransferase (172 aa).

Serine 9 contacts substrate. Residues 9–10 and histidine 17 each bind ATP; that span reads SF. Substrate is bound by residues lysine 41, leucine 78, and arginine 92. ATP is bound by residues 93-95, glutamate 103, and 128-134; these read GLR and GRAITST.

Belongs to the bacterial CoaD family. As to quaternary structure, homohexamer. Mg(2+) serves as cofactor.

The protein resides in the cytoplasm. It carries out the reaction (R)-4'-phosphopantetheine + ATP + H(+) = 3'-dephospho-CoA + diphosphate. The protein operates within cofactor biosynthesis; coenzyme A biosynthesis; CoA from (R)-pantothenate: step 4/5. Its function is as follows. Reversibly transfers an adenylyl group from ATP to 4'-phosphopantetheine, yielding dephospho-CoA (dPCoA) and pyrophosphate. The polypeptide is Phosphopantetheine adenylyltransferase (Bartonella quintana (strain Toulouse) (Rochalimaea quintana)).